We begin with the raw amino-acid sequence, 121 residues long: Large ribosomal subunit protein bL12 (121 aa).

Belongs to the bacterial ribosomal protein bL12 family. Homodimer. Part of the ribosomal stalk of the 50S ribosomal subunit. Forms a multimeric L10(L12)X complex, where L10 forms an elongated spine to which 2 to 4 L12 dimers bind in a sequential fashion. Binds GTP-bound translation factors.

Functionally, forms part of the ribosomal stalk which helps the ribosome interact with GTP-bound translation factors. Is thus essential for accurate translation. In Anoxybacillus flavithermus (strain DSM 21510 / WK1), this protein is Large ribosomal subunit protein bL12.